The primary structure comprises 270 residues: Phosphatidylinositol transfer protein alpha isoform (270 aa).

6 residues coordinate a 1,2-diacyl-sn-glycero-3-phospho-(1D-myo-inositol): threonine 58, lysine 60, glutamate 85, asparagine 89, threonine 96, and lysine 194. Lysine 215 is subject to N6-acetyllysine.

This sequence belongs to the PtdIns transfer protein family. PI transfer class I subfamily. In terms of processing, phosphorylated by PKC in a calcium and phosphatidylserine-dependent manner.

It is found in the cytoplasm. The protein localises to the nucleus. It carries out the reaction a 1,2-diacyl-sn-glycero-3-phosphocholine(in) = a 1,2-diacyl-sn-glycero-3-phosphocholine(out). It catalyses the reaction a 1,2-diacyl-sn-glycero-3-phospho-(1D-myo-inositol)(in) = a 1,2-diacyl-sn-glycero-3-phospho-(1D-myo-inositol)(out). Its function is as follows. Catalyzes the transfer of phosphatidylinositol (PI) and phosphatidylcholine (PC) between membranes. Shows a preference for PI and PC containing shorter saturated or monosaturated acyl chains at the sn-1 and sn-2 positions. Preference order for PC is C16:1 &gt; C16:0 &gt; C18:1 &gt; C18:0 &gt; C20:4 and for PI is C16:1 &gt; C16:0 &gt; C18:1 &gt; C18:0 &gt; C20:4 &gt; C20:3. This Bos taurus (Bovine) protein is Phosphatidylinositol transfer protein alpha isoform (PITPNA).